Here is a 145-residue protein sequence, read N- to C-terminus: Large ribosomal subunit protein mL43 (145 aa).

It belongs to the mitochondrion-specific ribosomal protein mL43 family. In terms of assembly, component of the mitochondrial large ribosomal subunit (mt-LSU). Mature yeast 74S mitochondrial ribosomes consist of a small (37S) and a large (54S) subunit. The 37S small subunit contains a 15S ribosomal RNA (15S mt-rRNA) and at least 32 different proteins. The 54S large subunit contains a 21S rRNA (21S mt-rRNA) and at least 45 different proteins.

It is found in the mitochondrion. Its function is as follows. Component of the mitochondrial ribosome (mitoribosome), a dedicated translation machinery responsible for the synthesis of mitochondrial genome-encoded proteins, including at least some of the essential transmembrane subunits of the mitochondrial respiratory chain. The mitoribosomes are attached to the mitochondrial inner membrane and translation products are cotranslationally integrated into the membrane. Also has an extraribosomal function, being essential for mitochondrial genome integrity. May interact with MHR1 to take part in the mtDNA repair mechanism. The protein is Large ribosomal subunit protein mL43 (mrpl51) of Schizosaccharomyces pombe (strain 972 / ATCC 24843) (Fission yeast).